A 739-amino-acid polypeptide reads, in one-letter code: Phosphoribosylformylglycinamidine synthase subunit PurL (739 aa).

Histidine 54 is an active-site residue. ATP is bound by residues tyrosine 57 and lysine 96. Glutamate 98 is a Mg(2+) binding site. Substrate is bound by residues 99–102 and arginine 121; that span reads SHNH. Histidine 100 (proton acceptor) is an active-site residue. Aspartate 122 lines the Mg(2+) pocket. Glutamine 245 contacts substrate. Aspartate 273 contacts Mg(2+). Position 317-319 (317-319) interacts with substrate; sequence ESQ. Positions 500 and 537 each coordinate ATP. Asparagine 538 provides a ligand contact to Mg(2+). A substrate-binding site is contributed by serine 540.

This sequence belongs to the FGAMS family. In terms of assembly, monomer. Part of the FGAM synthase complex composed of 1 PurL, 1 PurQ and 2 PurS subunits.

The protein localises to the cytoplasm. The catalysed reaction is N(2)-formyl-N(1)-(5-phospho-beta-D-ribosyl)glycinamide + L-glutamine + ATP + H2O = 2-formamido-N(1)-(5-O-phospho-beta-D-ribosyl)acetamidine + L-glutamate + ADP + phosphate + H(+). It functions in the pathway purine metabolism; IMP biosynthesis via de novo pathway; 5-amino-1-(5-phospho-D-ribosyl)imidazole from N(2)-formyl-N(1)-(5-phospho-D-ribosyl)glycinamide: step 1/2. Functionally, part of the phosphoribosylformylglycinamidine synthase complex involved in the purines biosynthetic pathway. Catalyzes the ATP-dependent conversion of formylglycinamide ribonucleotide (FGAR) and glutamine to yield formylglycinamidine ribonucleotide (FGAM) and glutamate. The FGAM synthase complex is composed of three subunits. PurQ produces an ammonia molecule by converting glutamine to glutamate. PurL transfers the ammonia molecule to FGAR to form FGAM in an ATP-dependent manner. PurS interacts with PurQ and PurL and is thought to assist in the transfer of the ammonia molecule from PurQ to PurL. The polypeptide is Phosphoribosylformylglycinamidine synthase subunit PurL (Bacillus cereus (strain B4264)).